A 173-amino-acid polypeptide reads, in one-letter code: Peptide methionine sulfoxide reductase MsrA (173 aa).

Cys10 is an active-site residue.

It belongs to the MsrA Met sulfoxide reductase family.

It carries out the reaction L-methionyl-[protein] + [thioredoxin]-disulfide + H2O = L-methionyl-(S)-S-oxide-[protein] + [thioredoxin]-dithiol. It catalyses the reaction [thioredoxin]-disulfide + L-methionine + H2O = L-methionine (S)-S-oxide + [thioredoxin]-dithiol. Functionally, has an important function as a repair enzyme for proteins that have been inactivated by oxidation. Catalyzes the reversible oxidation-reduction of methionine sulfoxide in proteins to methionine. The protein is Peptide methionine sulfoxide reductase MsrA of Psychrobacter cryohalolentis (strain ATCC BAA-1226 / DSM 17306 / VKM B-2378 / K5).